Reading from the N-terminus, the 190-residue chain is Hypoxanthine/guanine phosphoribosyltransferase (190 aa).

This sequence belongs to the purine/pyrimidine phosphoribosyltransferase family. Archaeal HPRT subfamily. As to quaternary structure, homodimer.

The protein localises to the cytoplasm. The catalysed reaction is IMP + diphosphate = hypoxanthine + 5-phospho-alpha-D-ribose 1-diphosphate. It catalyses the reaction GMP + diphosphate = guanine + 5-phospho-alpha-D-ribose 1-diphosphate. It participates in purine metabolism; IMP biosynthesis via salvage pathway; IMP from hypoxanthine: step 1/1. Its function is as follows. Catalyzes a salvage reaction resulting in the formation of IMP that is energically less costly than de novo synthesis. This chain is Hypoxanthine/guanine phosphoribosyltransferase, found in Methanohalophilus mahii (strain ATCC 35705 / DSM 5219 / SLP).